The sequence spans 65 residues: Temporin-SN1 (65 aa).

Positions 1 to 22 (MFTTKKSLLLLFFLGTINLSLC) are cleaved as a signal peptide. Positions 23–44 (QEERNAEEERRDGDDEGGVEVQ) are cleaved as a propeptide — removed in mature form. A Lysine amide modification is found at Lys65.

The protein belongs to the frog skin active peptide (FSAP) family. Temporin subfamily. As to expression, expressed by the skin glands.

The protein resides in the secreted. Its function is as follows. Antimicrobial peptide. Active against a variety of Gram-positive bacterial strains. Not active against Gram-negative bacteria and against fungi. Shows hemolytic activity against human erythrocytes. In Sylvirana spinulosa (Fine-spined frog), this protein is Temporin-SN1.